The chain runs to 274 residues: Large ribosomal subunit protein uL2 (274 aa).

The disordered stretch occupies residues 223 to 265; that stretch reads VVMNPVDHPHGGGEGRTSGGRHPVSPWGVPTKGYKTRSNKRTD.

It belongs to the universal ribosomal protein uL2 family. As to quaternary structure, part of the 50S ribosomal subunit. Forms a bridge to the 30S subunit in the 70S ribosome.

One of the primary rRNA binding proteins. Required for association of the 30S and 50S subunits to form the 70S ribosome, for tRNA binding and peptide bond formation. It has been suggested to have peptidyltransferase activity; this is somewhat controversial. Makes several contacts with the 16S rRNA in the 70S ribosome. In Vibrio vulnificus (strain CMCP6), this protein is Large ribosomal subunit protein uL2.